The chain runs to 188 residues: PRA1 family protein 3 (188 aa).

The residue at position 1 (Met1) is an N-acetylmethionine. The Cytoplasmic portion of the chain corresponds to 1 to 35 (MDVNIAPLRAWDDFFPGSDRFARPDFRDISKWNNR). 2 consecutive transmembrane segments (helical) span residues 36 to 56 (VVSNLLYYQTNYLVVAAMMIS) and 57 to 77 (VVGFLSPFNMILGGIVVVLVF). Residues 78–93 (TGFVWAAHNKDILRRL) are Cytoplasmic-facing. Helical transmembrane passes span 94–114 (KKQYPTVFVMVVMLASYFLIS) and 115–135 (MFGGVMVFVFGITFPLLLMFI). A required for homodimer formation and heterodimer formation with ARL6IP1 region spans residues 103 to 117 (MVVMLASYFLISMFG). Topologically, residues 136 to 188 (HASLRLRNLKNKLENKIEGIGLKRTPMGIVLDALEQQEENISKFADYISKVNE) are cytoplasmic. The interval 136–188 (HASLRLRNLKNKLENKIEGIGLKRTPMGIVLDALEQQEENISKFADYISKVNE) is targeting to endoplasmic reticulum membrane.

It belongs to the PRA1 family. As to quaternary structure, homodimer. Heterodimer with ARL6IP1. Forms multimers. Interacts with ARL6. Interacts with prenylated RAB1A and RAB3A. Interacts with SLC1A1/EAAC1. Interacts with RTN2 (via first transmembrane domain). Does not interact with VAMP1, VAMP2 or VAMP3.

The protein localises to the endoplasmic reticulum membrane. It is found in the cell membrane. It localises to the cytoplasm. The protein resides in the cytoskeleton. Functionally, regulates intracellular concentrations of taurine and glutamate. Negatively modulates SLC1A1/EAAC1 glutamate transport activity by decreasing its affinity for glutamate in a PKC activity-dependent manner. Plays a role in the retention of SLC1A1/EAAC1 in the endoplasmic reticulum. This Sus scrofa (Pig) protein is PRA1 family protein 3 (ARL6IP5).